Consider the following 293-residue polypeptide: Ribosomal protein L11 methyltransferase (293 aa).

S-adenosyl-L-methionine-binding residues include threonine 145, glycine 166, aspartate 188, and asparagine 230.

This sequence belongs to the methyltransferase superfamily. PrmA family.

Its subcellular location is the cytoplasm. It carries out the reaction L-lysyl-[protein] + 3 S-adenosyl-L-methionine = N(6),N(6),N(6)-trimethyl-L-lysyl-[protein] + 3 S-adenosyl-L-homocysteine + 3 H(+). Methylates ribosomal protein L11. This is Ribosomal protein L11 methyltransferase from Yersinia pseudotuberculosis serotype O:3 (strain YPIII).